We begin with the raw amino-acid sequence, 144 residues long: Transcription antitermination protein NusB (144 aa).

It belongs to the NusB family.

Involved in transcription antitermination. Required for transcription of ribosomal RNA (rRNA) genes. Binds specifically to the boxA antiterminator sequence of the ribosomal RNA (rrn) operons. In Dictyoglomus turgidum (strain DSM 6724 / Z-1310), this protein is Transcription antitermination protein NusB.